The primary structure comprises 587 residues: Glutamine--tRNA ligase (587 aa).

Residues proline 58–histidine 68 carry the 'HIGH' region motif. ATP is bound by residues glutamate 59 to asparagine 61 and histidine 65 to serine 71. L-glutamine is bound by residues aspartate 91 and tyrosine 240. Residues threonine 259 and arginine 294–leucine 295 contribute to the ATP site. The 'KMSKS' region motif lies at valine 301–arginine 305.

Belongs to the class-I aminoacyl-tRNA synthetase family. Monomer.

It localises to the cytoplasm. The enzyme catalyses tRNA(Gln) + L-glutamine + ATP = L-glutaminyl-tRNA(Gln) + AMP + diphosphate. This is Glutamine--tRNA ligase from Bordetella pertussis (strain Tohama I / ATCC BAA-589 / NCTC 13251).